We begin with the raw amino-acid sequence, 928 residues long: MEGDGVPWGSEPESGPGPGGGGVIRELCRGFGRYRRYLGRLRQNLRDTQKFFRDLRGSQPRGCPSSPAEGGEAGRGPAGDVAATGLPAGQLSCISFPPKEEKRLQQMVDCLPCILILGQDCSVKCQLLNLLLGVQVLPTNKLGGENCKLRRLRFTYGTQTRVSLALPDRYELVHTLAAHQGTWETVPEEDLEAREDSEDAARVLAELEVTMRHALLQEVDIVVAPCQGLRPTVDVLSDLVNDFLPVITYALHKDELSERDEQELQEIRKYFSFPIFFFKVPKLGSEIIDSSTERMESERSPLHRQLTDLGYLSSSLCNCGAPGQDTKAQSMLVEQSEKLRHLNTFSHQVLQTRLVDAAKALNLVHCRCLDIFINQAFDMQRDLQITPKRLEYTRKKENELYESLMNIANRKQEEMKDMIVETLNTMKEELLDDAANMEFKDVIVPENGEPVGTREIKCCIRQIQELIISRLNQAVANKLISSVDYLRESFVGTLERCLQSLEKSQDVSVHITSNYLKQILNAAYHVEVTFHSGSSVTRMLWEQIKQIIQRITWVSPPAITLEWKRKVAQEAIESLSASKLAKSICSQFRTRLNSSHEAFAASLRQLEAGHSGRLEKTEDLWLKVRKDHAPRLARLSLESRSLQDVLLHRKPKLGQELGRGQYGVVYLCDSWGGHFPCALKSVVPPDEKHWNDLALEFHYMRSLPKHERLVDLHGSVIDYSYGGGSSIAVLLIMERLHRDLYTGLKAGLALETRLQIALDVVEGIRFLHSQGLVHRDVKLKNVLLDKQNRAKITDLGFCKPEAMMSGSIVGTPIHMAPELFTGKYDNSVDVYAFGILFWYICSGSVKLPEAFERCASKDHLWNNVRRGARPERLPVFDEECWQLMEACWDGDPSQRPLLGIVQPMLQGIMDRLCKSHSERPNRGLDDST.

Residues 1–14 (MEGDGVPWGSEPES) are compositionally biased toward low complexity. 2 disordered regions span residues 1-22 (MEGDGVPWGSEPESGPGPGGGG) and 55-81 (LRGSQPRGCPSSPAEGGEAGRGPAGDV). The stretch at 394-430 (RKKENELYESLMNIANRKQEEMKDMIVETLNTMKEEL) forms a coiled coil. The Protein kinase domain maps to 651 to 905 (PKLGQELGRG…PLLGIVQPML (255 aa)). Residues 657–665 (LGRGQYGVV) and Lys-680 contribute to the ATP site. Asp-776 (proton acceptor) is an active-site residue.

Belongs to the protein kinase superfamily. Ser/Thr protein kinase family.

Its subcellular location is the cytoplasm. The protein localises to the cell membrane. The protein resides in the apical cell membrane. It is found in the basolateral cell membrane. It localises to the cell junction. It carries out the reaction L-seryl-[protein] + ATP = O-phospho-L-seryl-[protein] + ADP + H(+). The catalysed reaction is L-threonyl-[protein] + ATP = O-phospho-L-threonyl-[protein] + ADP + H(+). The enzyme catalyses L-tyrosyl-[protein] + ATP = O-phospho-L-tyrosyl-[protein] + ADP + H(+). In terms of biological role, acts as a positive regulator of ERK phosphorylation downstream of fibroblast growth factor-receptor activation. Involved in the regulation of both caspase-dependent apoptosis and caspase-independent cell death. In the skin, it plays a predominant role in suppressing caspase-dependent apoptosis in response to UV stress in a range of dermal cell types. This Bos taurus (Bovine) protein is Dual serine/threonine and tyrosine protein kinase (DSTYK).